Reading from the N-terminus, the 1470-residue chain is Rap guanine nucleotide exchange factor (1470 aa).

2 disordered regions span residues 130–227 (PTEP…SYND) and 250–313 (HRRE…GGFM). Positions 173 to 183 (MPPPPVPPRPL) are enriched in pro residues. 2 stretches are compositionally biased toward low complexity: residues 184–193 (RLPQTAAKGP) and 215–224 (TTSSSSSNTS). A compositionally biased stretch (polar residues) spans 256 to 266 (NSVGGQAQNGI). Positions 275-292 (RSTASSTTTEGETASNEG) are enriched in low complexity. An a nucleoside 3',5'-cyclic phosphate-binding site is contributed by 347 to 463 (AFAALPMSIK…IEKDRDGLTG (117 aa)). The 115-residue stretch at 478–592 (CGQVLIKGKP…SLLNIACSVK (115 aa)) folds into the N-terminal Ras-GEF domain. Positions 597–679 (QVILTRRKDD…LTLMLKNNVL (83 aa)) constitute a PDZ domain. The 88-residue stretch at 782–869 (PEHVLKIYRN…SRYYLKNNSR (88 aa)) folds into the Ras-associating domain. The 231-residue stretch at 894-1124 (NAQVVAAQLT…FENSNVATMR (231 aa)) folds into the Ras-GEF domain. Polar residues predominate over residues 1176-1189 (QTAHRGANSSSTAN). 4 disordered regions span residues 1176–1213 (QTAH…DQSS), 1253–1326 (KVKG…NIPP), 1347–1370 (VIPT…PASS), and 1422–1455 (ATLP…RMGT). Low complexity predominate over residues 1198–1211 (PSSLSSQSAGSADQ). 2 stretches are compositionally biased toward polar residues: residues 1260-1274 (QITS…SLQR) and 1282-1308 (RQAT…YQSD). Over residues 1309–1321 (NGRRQRSGSEGRF) the composition is skewed to basic and acidic residues. Residues 1349-1370 (PTHPHGHSPTSPRCRSRSPASS) show a composition bias toward low complexity.

Belongs to the RAPGEF2 family. Expressed in hermaphrodite-specific neurons (HSNs), oviduct sheath cells and lateral seam cells.

In terms of biological role, acts as a guanine nucleotide exchange factor for small G protein GTPases like rap-1 and rap-2. Required in the hypodermis, especially in the seam cells, for proper formation of the cuticle. The chain is Rap guanine nucleotide exchange factor (pxf-1) from Caenorhabditis elegans.